Reading from the N-terminus, the 416-residue chain is MEKLYVEGNKILNGHVIISGSKNAALPILFMTILTEGKIKIGNIPNLTDINIALKLLVYLGVKITGNETLCIDASSINIFCPPYNLINKIRASIWILGPLLARFGKAKIFLPGGCKIGSRPIDLHLNGLTQLGATINLKNNCIDAYVKGRLQGKYILMEKISVGATITIMSAATLAKGSTIIDNAACEPEIVDIAKFLNTLGADIIGAGSNKICIKGVLKLTGGTHQVIPDRIETGTFLVAAAASQGHITCHKTEPKHLTNVLMKLTEAGAKIKTGKDWIKLDMRGKRPKSLNICTAPYPGFPTDMQAQFALLNSISKGIGTITETIFENRFIYTSELIRMGAKIKIKNNTIICCGIPKLISSNVFSSDLRASATLILAGCIAAGITIVNHTYHLVRGYESFPKKLNKIGANIKII.

K22–N23 serves as a coordination point for phosphoenolpyruvate. R91 is a UDP-N-acetyl-alpha-D-glucosamine binding site. Residue C115 is the Proton donor of the active site. Residue C115 is modified to 2-(S-cysteinyl)pyruvic acid O-phosphothioketal. Residues R120–L124, D305, and I327 contribute to the UDP-N-acetyl-alpha-D-glucosamine site.

The protein belongs to the EPSP synthase family. MurA subfamily.

Its subcellular location is the cytoplasm. The enzyme catalyses phosphoenolpyruvate + UDP-N-acetyl-alpha-D-glucosamine = UDP-N-acetyl-3-O-(1-carboxyvinyl)-alpha-D-glucosamine + phosphate. The protein operates within cell wall biogenesis; peptidoglycan biosynthesis. In terms of biological role, cell wall formation. Adds enolpyruvyl to UDP-N-acetylglucosamine. The polypeptide is UDP-N-acetylglucosamine 1-carboxyvinyltransferase (Buchnera aphidicola subsp. Acyrthosiphon pisum (strain Tuc7)).